The primary structure comprises 192 residues: Thymidine kinase (192 aa).

ATP-binding positions include 9-16 (GAMNSGKS) and 85-88 (DEVQ). E86 functions as the Proton acceptor in the catalytic mechanism. Zn(2+)-binding residues include C143, C146, C181, and C184.

Belongs to the thymidine kinase family. In terms of assembly, homotetramer.

Its subcellular location is the cytoplasm. The catalysed reaction is thymidine + ATP = dTMP + ADP + H(+). This is Thymidine kinase from Shouchella clausii (strain KSM-K16) (Alkalihalobacillus clausii).